Consider the following 558-residue polypeptide: N-terminal histidine N-methyltransferase (558 aa).

At 1-15 (MAPFRSIYEKDATKK) the chain is on the cytoplasmic side. The chain crosses the membrane as a helical span at residues 16–32 (LVVGAALLVLAAFYSYV). The Lumenal segment spans residues 33-49 (FLLTLAPVYGSTPSHIF). Residues 50–65 (HGYGVGIAGVAGWFSK) form a helical membrane-spanning segment. At 66–77 (DIVDRVSGRKAI) the chain is on the cytoplasmic side. A helical membrane pass occupies residues 78–96 (YAIPVLAFFLPVVQYFVSQ). Over 97-104 (QSSALGNP) the chain is Lumenal. A helical membrane pass occupies residues 105–131 (AGPIFTEVLALYPLVLLSVACAGKLVQ). At 132 to 145 (AGLNLQRHGDLVAE) the chain is on the cytoplasmic side. Residues 146–169 (HIPLLGSYVIYSAGEHLIKAFLSR) traverse the membrane as a helical segment. The Lumenal portion of the chain corresponds to 170–172 (FIG). The chain crosses the membrane as a helical span at residues 173 to 194 (STVLLSRAGLQILIAIFYAAAV). Topologically, residues 195-197 (PSK) are cytoplasmic. A helical transmembrane segment spans residues 198-215 (ALLLAIPAFLFSVTSNTH). Residues 216–558 (LPLGHTTTAL…VLPDRVWEGW (343 aa)) are Lumenal-facing.

Belongs to the methyltransferase superfamily.

Its subcellular location is the endoplasmic reticulum membrane. The enzyme catalyses L-histidyl-[protein] + S-adenosyl-L-methionine = N(tele)-methyl-L-histidyl-[protein] + S-adenosyl-L-homocysteine + H(+). Protein-histidine N-methyltransferase that specifically mediates 3-methylhistidine (tele-methylhistidine) methylation at 'His-1', which protects the side-chain from oxidative damage. Methylates lytic polysaccharide monooxygenases (LPMOs) destined for secretion, including AN4702. This Emericella nidulans (strain FGSC A4 / ATCC 38163 / CBS 112.46 / NRRL 194 / M139) (Aspergillus nidulans) protein is N-terminal histidine N-methyltransferase.